The primary structure comprises 269 residues: ParA family protein MG470 (269 aa).

Belongs to the ParA family.

This is ParA family protein MG470 from Mycoplasma genitalium (strain ATCC 33530 / DSM 19775 / NCTC 10195 / G37) (Mycoplasmoides genitalium).